The chain runs to 644 residues: Threonine--tRNA ligase (644 aa).

Residues 1–61 enclose the TGS domain; it reads MPVITLPDGS…EKDTKLTIIT (61 aa). The segment at 242 to 535 is catalytic; sequence DHRRIGADLD…LIEHYEGKFP (294 aa). Cys335, His386, and His512 together coordinate Zn(2+).

Belongs to the class-II aminoacyl-tRNA synthetase family. In terms of assembly, homodimer. Zn(2+) is required as a cofactor.

It is found in the cytoplasm. The catalysed reaction is tRNA(Thr) + L-threonine + ATP = L-threonyl-tRNA(Thr) + AMP + diphosphate + H(+). In terms of biological role, catalyzes the attachment of threonine to tRNA(Thr) in a two-step reaction: L-threonine is first activated by ATP to form Thr-AMP and then transferred to the acceptor end of tRNA(Thr). Also edits incorrectly charged L-seryl-tRNA(Thr). The sequence is that of Threonine--tRNA ligase from Nitrosococcus oceani (strain ATCC 19707 / BCRC 17464 / JCM 30415 / NCIMB 11848 / C-107).